A 231-amino-acid chain; its full sequence is Proteasome subunit alpha type-2 (231 aa).

It belongs to the peptidase T1A family. The 26S proteasome consists of a 20S proteasome core and two 19S regulatory subunits. The 20S proteasome core is composed of 28 subunits that are arranged in four stacked rings, resulting in a barrel-shaped structure. The two end rings are each formed by seven alpha subunits, and the two central rings are each formed by seven beta subunits. The catalytic chamber with the active sites is on the inside of the barrel.

Its subcellular location is the cytoplasm. The protein localises to the nucleus. The proteasome is a multicatalytic proteinase complex which is characterized by its ability to cleave peptides with Arg, Phe, Tyr, Leu, and Glu adjacent to the leaving group at neutral or slightly basic pH. The proteasome has an ATP-dependent proteolytic activity. This is Proteasome subunit alpha type-2 (pas-2) from Caenorhabditis elegans.